The primary structure comprises 239 residues: 1-(5-phosphoribosyl)-5-[(5-phosphoribosylamino)methylideneamino] imidazole-4-carboxamide isomerase (239 aa).

Residue Asp-8 is the Proton acceptor of the active site. Asp-129 functions as the Proton donor in the catalytic mechanism.

The protein belongs to the HisA/HisF family.

It is found in the cytoplasm. It carries out the reaction 1-(5-phospho-beta-D-ribosyl)-5-[(5-phospho-beta-D-ribosylamino)methylideneamino]imidazole-4-carboxamide = 5-[(5-phospho-1-deoxy-D-ribulos-1-ylimino)methylamino]-1-(5-phospho-beta-D-ribosyl)imidazole-4-carboxamide. Its pathway is amino-acid biosynthesis; L-histidine biosynthesis; L-histidine from 5-phospho-alpha-D-ribose 1-diphosphate: step 4/9. In Legionella pneumophila (strain Lens), this protein is 1-(5-phosphoribosyl)-5-[(5-phosphoribosylamino)methylideneamino] imidazole-4-carboxamide isomerase.